The primary structure comprises 313 residues: Protein ABA AND ROS SENSITIVE 1 (313 aa).

A Nuclear localization signal 1 motif is present at residues 5 to 12 (AKKKAMFR). The C2H2-type zinc finger occupies 39–61 (CRVCNVVLKSESLWDVHQASRKH). The span at 115–131 (ARAEVEPAKSKNLEQSK) shows a compositional bias: basic and acidic residues. Disordered regions lie at residues 115-189 (ARAE…LPTG), 232-254 (MEEE…QRSY), and 271-313 (ARLA…AQHL). The span at 155-176 (TDSSNTKTTSEPKQSQTQTTGP) shows a compositional bias: polar residues. The span at 232–248 (MEEEEVDAAETIEEEEQ) shows a compositional bias: acidic residues. The stretch at 232 to 271 (MEEEEVDAAETIEEEEQREQRSYKEKVEILKRKKMELKAA) forms a coiled coil. Residues 274-281 (AKRSKTSE) carry the Nuclear localization signal 2 motif. Positions 293 to 305 (ESPSDEEDDEDSA) are enriched in acidic residues.

As to expression, mostly expressed in siliques and, to a lower extent, in roots. Barely deteclable in leaves and stems.

The protein localises to the nucleus. Its subcellular location is the cytoplasm. Essential for breaking seed dormancy before seed germination. Prevents reactive oxygen species (ROS) accumulation in response to abscisic acid (ABA) and oxidative stress, probably by repressing the accumulation of ABA-induced ROS-scavenging enzymes (e.g. CSD3). The protein is Protein ABA AND ROS SENSITIVE 1 of Arabidopsis thaliana (Mouse-ear cress).